The sequence spans 861 residues: Replication factor C subunit 1 (861 aa).

The disordered stretch occupies residues 1–103 (MVNISDFFGK…SSKSSDSASN (103 aa)). A compositionally biased stretch (polar residues) spans 16-28 (RSSTSRPTRQVGS). The residue at position 38 (T38) is a Phosphothreonine. S40 carries the phosphoserine modification. Phosphothreonine is present on T63. The BRCT domain maps to 153–243 (GKPNCLLGLT…PAEGGDGEAA (91 aa)). ATP-binding positions include T299, C311, 353–361 (GPPGIGKTT), and N456. Residues 788–861 (STIGGGGVGT…GGSKKRKTKA (74 aa)) form a disordered region. Residues 803–823 (DFEDVVDADDNPVPADDEETQ) show a composition bias toward acidic residues. Short sequence motifs (nuclear localization signal) lie at residues 830 to 834 (KKDKL) and 855 to 860 (KKRKTK). Residues 836 to 861 (KQKAKPTKRKTATSKPGGSKKRKTKA) show a composition bias toward basic residues.

This sequence belongs to the activator 1 large subunit family. Replication factor C (RFC) is a heteropentamer of subunits RFC1, RFC2, RFC3, RFC4 and RFC5 and forms a complex with POL30/PCNA in the presence of ATP. Interacts with ECO1 and POL30/PCNA.

It localises to the nucleus. In terms of biological role, component of the ATP-dependent clamp loader RFC complex for the POL30/PCNA homotrimer DNA clamp. During a clamp loading circle, the RFC:clamp complex binds to DNA and the recognition of the double-stranded/single-stranded junction stimulates ATP hydrolysis by RFC. The complex presumably provides bipartite ATP sites in which one subunit supplies a catalytic site for hydrolysis of ATP bound to the neighboring subunit. Dissociation of RFC from the clamp leaves the clamp encircling DNA. Replication factor C (RFC or activator 1) complex acts during elongation of primed DNA templates by DNA polymerase delta and epsilon. RFC has an essential but redundant activity in sister chromatid cohesion establishment. This chain is Replication factor C subunit 1 (RFC1), found in Saccharomyces cerevisiae (strain ATCC 204508 / S288c) (Baker's yeast).